The sequence spans 494 residues: Putative bifunctional dihydrofolate reductase-thymidylate synthase (494 aa).

The DHFR domain maps to 1–167; it reads MGIGKDGTLP…IKHSFISFVR (167 aa). 2–8 lines the NADP(+) pocket; sequence GIGKDGT. Asp16 serves as a coordination point for substrate. Residues 40–42 and 61–64 contribute to the NADP(+) site; these read RKT and LTRS. Ile103 is a substrate binding site. 104 to 111 lines the NADP(+) pocket; the sequence is GGGEILRQ. Residue Thr124 coordinates substrate. The tract at residues 170 to 494 is thymidylate synthase; that stretch reads KSIAEANDSS…HHKIEMKMAV (325 aa). Arg231 contacts dUMP. The active site involves Cys376. Residues His377, 395-399, Asn407, and 437-439 each bind dUMP; these read QRSAD and HVY.

The protein in the N-terminal section; belongs to the dihydrofolate reductase family. In the C-terminal section; belongs to the thymidylate synthase family.

It carries out the reaction (6S)-5,6,7,8-tetrahydrofolate + NADP(+) = 7,8-dihydrofolate + NADPH + H(+). The catalysed reaction is dUMP + (6R)-5,10-methylene-5,6,7,8-tetrahydrofolate = 7,8-dihydrofolate + dTMP. Its pathway is cofactor biosynthesis; tetrahydrofolate biosynthesis; 5,6,7,8-tetrahydrofolate from 7,8-dihydrofolate: step 1/1. Functionally, bifunctional enzyme. Involved in de novo dTMP biosynthesis. Key enzyme in folate metabolism. Can play two different roles depending on the source of dihydrofolate: de novo synthesis of tetrahydrofolate or recycling of the dihydrofolate released as one of the end products of the TS catalyzed reaction. Catalyzes an essential reaction for de novo glycine and purine synthesis, DNA precursor synthesis, and for the conversion of dUMP to dTMP. The chain is Putative bifunctional dihydrofolate reductase-thymidylate synthase from Oryza sativa subsp. japonica (Rice).